The primary structure comprises 222 residues: Triosephosphate isomerase (222 aa).

9–11 provides a ligand contact to substrate; sequence NLK. The active-site Electrophile is histidine 93. Catalysis depends on glutamate 141, which acts as the Proton acceptor. Substrate-binding positions include isoleucine 146, glycine 181, and 202-203; that span reads AS.

It belongs to the triosephosphate isomerase family. In terms of assembly, homotetramer; dimer of dimers.

The protein resides in the cytoplasm. The enzyme catalyses D-glyceraldehyde 3-phosphate = dihydroxyacetone phosphate. Its pathway is carbohydrate biosynthesis; gluconeogenesis. The protein operates within carbohydrate degradation; glycolysis; D-glyceraldehyde 3-phosphate from glycerone phosphate: step 1/1. Functionally, involved in the gluconeogenesis. Catalyzes stereospecifically the conversion of dihydroxyacetone phosphate (DHAP) to D-glyceraldehyde-3-phosphate (G3P). In Methanoculleus marisnigri (strain ATCC 35101 / DSM 1498 / JR1), this protein is Triosephosphate isomerase.